Reading from the N-terminus, the 181-residue chain is Shikimate kinase (181 aa).

Residue 17 to 22 (GAGKTT) participates in ATP binding. Residue Thr21 coordinates Mg(2+). Residues Asp39, Arg63, and Gly85 each contribute to the substrate site. Arg122 serves as a coordination point for ATP. Arg141 is a substrate binding site.

Belongs to the shikimate kinase family. In terms of assembly, monomer. Mg(2+) serves as cofactor.

Its subcellular location is the cytoplasm. The enzyme catalyses shikimate + ATP = 3-phosphoshikimate + ADP + H(+). It participates in metabolic intermediate biosynthesis; chorismate biosynthesis; chorismate from D-erythrose 4-phosphate and phosphoenolpyruvate: step 5/7. Catalyzes the specific phosphorylation of the 3-hydroxyl group of shikimic acid using ATP as a cosubstrate. This chain is Shikimate kinase, found in Nostoc sp. (strain PCC 7120 / SAG 25.82 / UTEX 2576).